Reading from the N-terminus, the 104-residue chain is Urease subunit gamma (104 aa).

Belongs to the urease gamma subunit family. In terms of assembly, heterotrimer of UreA (gamma), UreB (beta) and UreC (alpha) subunits. Three heterotrimers associate to form the active enzyme.

Its subcellular location is the cytoplasm. The enzyme catalyses urea + 2 H2O + H(+) = hydrogencarbonate + 2 NH4(+). The protein operates within nitrogen metabolism; urea degradation; CO(2) and NH(3) from urea (urease route): step 1/1. The sequence is that of Urease subunit gamma from Actinomyces naeslundii.